Consider the following 451-residue polypeptide: Trigger factor (451 aa).

Residues G173–P258 enclose the PPIase FKBP-type domain.

It belongs to the FKBP-type PPIase family. Tig subfamily.

It is found in the cytoplasm. The catalysed reaction is [protein]-peptidylproline (omega=180) = [protein]-peptidylproline (omega=0). Functionally, involved in protein export. Acts as a chaperone by maintaining the newly synthesized protein in an open conformation. Functions as a peptidyl-prolyl cis-trans isomerase. The chain is Trigger factor from Cupriavidus necator (strain ATCC 17699 / DSM 428 / KCTC 22496 / NCIMB 10442 / H16 / Stanier 337) (Ralstonia eutropha).